We begin with the raw amino-acid sequence, 219 residues long: Orotate phosphoribosyltransferase (219 aa).

Position 26 (Lys-26) interacts with 5-phospho-alpha-D-ribose 1-diphosphate. Position 34 to 35 (34 to 35 (FF)) interacts with orotate. Residues 72 to 73 (YK), Arg-98, Lys-99, Lys-102, His-104, and 124 to 132 (DDVITAGTA) contribute to the 5-phospho-alpha-D-ribose 1-diphosphate site. Positions 128 and 156 each coordinate orotate.

It belongs to the purine/pyrimidine phosphoribosyltransferase family. PyrE subfamily. Homodimer. Mg(2+) is required as a cofactor.

The catalysed reaction is orotidine 5'-phosphate + diphosphate = orotate + 5-phospho-alpha-D-ribose 1-diphosphate. It functions in the pathway pyrimidine metabolism; UMP biosynthesis via de novo pathway; UMP from orotate: step 1/2. Functionally, catalyzes the transfer of a ribosyl phosphate group from 5-phosphoribose 1-diphosphate to orotate, leading to the formation of orotidine monophosphate (OMP). The sequence is that of Orotate phosphoribosyltransferase from Xylella fastidiosa (strain 9a5c).